The chain runs to 501 residues: Mitogen-activated protein kinase 16 (501 aa).

In terms of domain architecture, Protein kinase spans 22–313; sequence YEVTEVVGKG…AAEALTDPYF (292 aa). Residues 28–36 and Lys51 each bind ATP; that span reads VGKGSYGVV. Asp148 (proton acceptor) is an active-site residue. Thr184 carries the post-translational modification Phosphothreonine. A TXY motif is present at residues 184-186; it reads TDY. Phosphotyrosine is present on Tyr186. The tract at residues 477–501 is disordered; sequence DEESMSEYMNEAADGVPHKIAQLKT.

Belongs to the protein kinase superfamily. CMGC Ser/Thr protein kinase family. MAP kinase subfamily. Post-translationally, dually phosphorylated on Thr-184 and Tyr-186, which activates the enzyme.

It catalyses the reaction L-seryl-[protein] + ATP = O-phospho-L-seryl-[protein] + ADP + H(+). The enzyme catalyses L-threonyl-[protein] + ATP = O-phospho-L-threonyl-[protein] + ADP + H(+). With respect to regulation, activated by threonine and tyrosine phosphorylation. The protein is Mitogen-activated protein kinase 16 (MPK16) of Oryza sativa subsp. japonica (Rice).